The sequence spans 583 residues: Ankyrin repeat and SOCS box protein 15 (583 aa).

ANK repeat units lie at residues K75 to W104, D110 to T139, K143 to Q172, K176 to L205, F209 to A238, D242 to V271, A275 to I304, S307 to A336, E349 to L378, D379 to C408, and T416 to L444. An SOCS box domain is found at W524–D579.

Belongs to the ankyrin SOCS box (ASB) family.

The protein operates within protein modification; protein ubiquitination. In terms of biological role, may be a substrate-recognition component of a SCF-like ECS (Elongin-Cullin-SOCS-box protein) E3 ubiquitin-protein ligase complex which mediates the ubiquitination and subsequent proteasomal degradation of target proteins. The sequence is that of Ankyrin repeat and SOCS box protein 15 (Asb15) from Mus musculus (Mouse).